Reading from the N-terminus, the 517-residue chain is Retinal dehydrogenase 2 (517 aa).

NAD(+) is bound by residues I184 to W186, K210 to E213, and S264 to E266. The active-site Proton acceptor is E286. C320 serves as the catalytic Nucleophile. NAD(+) contacts are provided by residues K366 to K370 and E417.

It belongs to the aldehyde dehydrogenase family. In terms of assembly, homotetramer. As to expression, expressed in the high vocal center (HVC) which integrates auditory and motor activities and constitutes a nodal nucleus on the song system.

The protein localises to the cytoplasm. The catalysed reaction is retinal + NAD(+) + H2O = retinoate + NADH + 2 H(+). It carries out the reaction all-trans-retinal + NAD(+) + H2O = all-trans-retinoate + NADH + 2 H(+). The enzyme catalyses all-trans-13,14-dihydroretinal + NAD(+) + H2O = all-trans-13,14-dihydroretinoate + NADH + 2 H(+). It functions in the pathway cofactor metabolism; retinol metabolism. Functionally, catalyzes the NAD-dependent oxidation of aldehyde substrates, such as all-trans-retinal and all-trans-13,14-dihydroretinal, to their corresponding carboxylic acids, all-trans-retinoate and all-trans-13,14-dihydroretinoate, respectively. Retinoate signaling is critical for the transcriptional control of many genes, for instance it is crucial for initiation of meiosis in both male and female. Recognizes retinal as substrate, both in its free form and when bound to cellular retinol-binding protein. Lacks activity with benzaldehyde, acetaldehyde and octanal. Displays complete lack of activity with citral. Plays a significant role in the acquisition and production of learned songs. The protein is Retinal dehydrogenase 2 (ALDH1A2) of Taeniopygia guttata (Zebra finch).